A 952-amino-acid polypeptide reads, in one-letter code: Hexon protein (952 aa).

Alanine 2 carries the post-translational modification N-acetylalanine; by host. A compositionally biased stretch (acidic residues) spans 149–161 (EDDDNEDEVDEQA). The segment at 149-172 (EDDDNEDEVDEQAEQQKTHVFGQA) is disordered. Position 175 is a phosphoserine; by host (serine 175). The residue at position 940 (tyrosine 940) is a Phosphotyrosine; by host.

The protein belongs to the adenoviridae hexon protein family. Homotrimer. Interacts with the capsid vertex protein; this interaction binds the peripentonal hexons to the neighboring penton base. Interacts with the hexon-linking protein; this interaction tethers the hexons surrounding the penton to those situated in the central plate of the facet. Interacts with the hexon-interlacing protein; this interaction lashes the hexons together. Interacts with host dyneins DYNC1LI1 and DYNC1I2; this interaction might be involved in intracellular microtubule-dependent transport of incoming viral capsid. Interacts with the shutoff protein; this interaction allows folding and formation of hexons trimers. Interacts with pre-protein VI; this interaction probably allows nuclear import of hexon trimers and possibly pre-capsid assembly. Interacts with host NUP214 (via N-terminus); this interaction might be essential for the release of the virus genome to the nucleus.

The protein resides in the virion. It localises to the host nucleus. Functionally, major capsid protein that self-associates to form 240 hexon trimers, each in the shape of a hexagon, building most of the pseudo T=25 capsid. Assembled into trimeric units with the help of the chaperone shutoff protein. Transported by pre-protein VI to the nucleus where it associates with other structural proteins to form an empty capsid. Might be involved, through its interaction with host dyneins, in the intracellular microtubule-dependent transport of incoming viral capsid to the nucleus. This Homo sapiens (Human) protein is Hexon protein.